The following is a 679-amino-acid chain: Methionine--tRNA ligase (679 aa).

The 'HIGH' region signature appears at 15 to 25 (PYANGPIHLGH). Zn(2+) is bound by residues Cys-146, Cys-149, Cys-159, and Cys-162. Positions 332-336 (KMSKS) match the 'KMSKS' region motif. Lys-335 is an ATP binding site. The region spanning 578 to 679 (DFAKIDLRIA…EGAQPGMKVK (102 aa)) is the tRNA-binding domain.

Belongs to the class-I aminoacyl-tRNA synthetase family. MetG type 1 subfamily. Homodimer. Zn(2+) serves as cofactor.

It is found in the cytoplasm. The enzyme catalyses tRNA(Met) + L-methionine + ATP = L-methionyl-tRNA(Met) + AMP + diphosphate. Functionally, is required not only for elongation of protein synthesis but also for the initiation of all mRNA translation through initiator tRNA(fMet) aminoacylation. The sequence is that of Methionine--tRNA ligase from Shewanella pealeana (strain ATCC 700345 / ANG-SQ1).